The chain runs to 514 residues: RNA-binding region-containing protein 3 (514 aa).

The tract at residues 1 to 26 is disordered; that stretch reads MAGPEPPMPLSRGGPGSASLSPPRGD. S21 carries the post-translational modification Phosphoserine. An RRM 1 domain is found at 27-102; sequence RTLLVRHLPA…HTLVVEFAKE (76 aa). 3 disordered regions span residues 106-133, 213-282, and 337-363; these read VHSPCSTSNTEKKKRLDDTVENDKEKKE, MPLH…VRKK, and ETQPNNEEENSDSPDTGLDSNTGFGKI. Phosphoserine is present on S108. The segment covering 115-133 has biased composition (basic and acidic residues); that stretch reads TEKKKRLDDTVENDKEKKE. Positions 217–230 are enriched in pro residues; that stretch reads APLPPTSPQPPEEP. Position 349 is a phosphoserine (S349). One can recognise an RRM 2 domain in the interval 418-501; it reads CRIYVKNLAR…KPMVVQFARS (84 aa).

In terms of assembly, component of the U11/U12 snRNPs that are part of the U12-type spliceosome. Found in a complex with m(7)G-capped U12 snRNA. Interacts with PDCD7.

It localises to the nucleus. Participates in pre-mRNA U12-dependent splicing, performed by the minor spliceosome which removes U12-type introns. U12-type introns comprises less than 1% of all non-coding sequences. Binds to the 3'-stem-loop of m(7)G-capped U12 snRNA. The protein is RNA-binding region-containing protein 3 (Rnpc3) of Mus musculus (Mouse).